A 473-amino-acid polypeptide reads, in one-letter code: Probable aspartokinase (473 aa).

ACT domains follow at residues 323-392 and 409-473; these read IFGA…FLNN and VVGA…KTNS.

The protein belongs to the aspartokinase family.

The catalysed reaction is L-aspartate + ATP = 4-phospho-L-aspartate + ADP. It functions in the pathway amino-acid biosynthesis; L-lysine biosynthesis via DAP pathway; (S)-tetrahydrodipicolinate from L-aspartate: step 1/4. Its pathway is amino-acid biosynthesis; L-methionine biosynthesis via de novo pathway; L-homoserine from L-aspartate: step 1/3. It participates in amino-acid biosynthesis; L-threonine biosynthesis; L-threonine from L-aspartate: step 1/5. The chain is Probable aspartokinase from Methanocaldococcus jannaschii (strain ATCC 43067 / DSM 2661 / JAL-1 / JCM 10045 / NBRC 100440) (Methanococcus jannaschii).